Consider the following 70-residue polypeptide: Enhancer of split m6 protein (70 aa).

The protein is Enhancer of split m6 protein of Drosophila melanogaster (Fruit fly).